Consider the following 307-residue polypeptide: Homoserine kinase (307 aa).

85 to 95 (PLTRGLGSSAA) is a binding site for ATP.

It belongs to the GHMP kinase family. Homoserine kinase subfamily.

The protein resides in the cytoplasm. It carries out the reaction L-homoserine + ATP = O-phospho-L-homoserine + ADP + H(+). It participates in amino-acid biosynthesis; L-threonine biosynthesis; L-threonine from L-aspartate: step 4/5. In terms of biological role, catalyzes the ATP-dependent phosphorylation of L-homoserine to L-homoserine phosphate. This chain is Homoserine kinase, found in Caldicellulosiruptor bescii (strain ATCC BAA-1888 / DSM 6725 / KCTC 15123 / Z-1320) (Anaerocellum thermophilum).